Reading from the N-terminus, the 368-residue chain is Cyclic GMP-AMP synthase-like receptor (368 aa).

Residues Ser-60 and 72–74 (EYD) each bind ATP. Mg(2+)-binding residues include Glu-72, Asp-74, and Asp-190. GTP is bound by residues Asp-190 and 229 to 236 (RASFYRQE). ATP is bound by residues 233-236 (YRQE), Lys-254, and 268-272 (SYFIK).

It belongs to the mab-21 family. Mg(2+) serves as cofactor. Requires Mn(2+) as cofactor.

The enzyme catalyses GTP + ATP = 3',2'-cGAMP + 2 diphosphate. The catalysed reaction is GTP + ATP = pppA(2'-5')pG + diphosphate. It catalyses the reaction pppA(2'-5')pG = 3',2'-cGAMP + diphosphate. The enzyme activity is specifically activated by double-stranded RNA (dsRNA). Nucleotidyltransferase that catalyzes the formation of cyclic GMP-AMP (3',2'-cGAMP) from ATP and GTP and plays a key role in innate immunity. Synthesizes 3',2'-cGAMP in a two-step reaction through production of the linear intermediate pppA(2'-5')pG. Acts as a key sensor of double-stranded RNA (dsRNA), the presence of dsRNA in the cytoplasm being a danger signal that triggers the immune responses. Directly binds dsRNA, activating the nucleotidyltransferase activity, leading to synthesis of 3',2'-cGAMP, a second messenger that binds to and activates Sting, thereby triggering the antiviral immune response via activation of the NF-kappa-B transcription factor Rel (Relish). This Lucilia cuprina (Green bottle fly) protein is Cyclic GMP-AMP synthase-like receptor.